A 127-amino-acid polypeptide reads, in one-letter code: Small ribosomal subunit protein uS12 (127 aa).

Positions 1–28 (MPTIQQLIRDERSKAKRKTKSPALKQCP) are disordered. D89 is modified (3-methylthioaspartic acid). The disordered stretch occupies residues 104-127 (ATGVKNRQKARSKYGTKRPKPAAK). The segment covering 109-127 (NRQKARSKYGTKRPKPAAK) has biased composition (basic residues).

The protein belongs to the universal ribosomal protein uS12 family. Part of the 30S ribosomal subunit. Contacts proteins S8 and S17. May interact with IF1 in the 30S initiation complex.

With S4 and S5 plays an important role in translational accuracy. Its function is as follows. Interacts with and stabilizes bases of the 16S rRNA that are involved in tRNA selection in the A site and with the mRNA backbone. Located at the interface of the 30S and 50S subunits, it traverses the body of the 30S subunit contacting proteins on the other side and probably holding the rRNA structure together. The combined cluster of proteins S8, S12 and S17 appears to hold together the shoulder and platform of the 30S subunit. In Microcystis aeruginosa (strain NIES-843 / IAM M-2473), this protein is Small ribosomal subunit protein uS12.